The chain runs to 313 residues: Ribose 1,5-bisphosphate isomerase (313 aa).

Substrate is bound by residues 17–20 (RGAA) and Arg57. Residue Cys121 is the Proton acceptor of the active site. The Proton donor role is filled by Asp190. Substrate contacts are provided by residues 200–201 (NK) and Lys226.

It belongs to the eIF-2B alpha/beta/delta subunits family. R15P isomerase subfamily.

The enzyme catalyses alpha-D-ribose 1,5-bisphosphate = D-ribulose 1,5-bisphosphate. Catalyzes the isomerization of ribose 1,5-bisphosphate (R15P) to ribulose 1,5-bisphosphate (RuBP), the CO(2) acceptor and substrate for RubisCO. Functions in an archaeal AMP degradation pathway, together with AMP phosphorylase and RubisCO. This is Ribose 1,5-bisphosphate isomerase from Archaeoglobus fulgidus (strain ATCC 49558 / DSM 4304 / JCM 9628 / NBRC 100126 / VC-16).